Here is a 1553-residue protein sequence, read N- to C-terminus: Pre-mRNA cleavage complex 2 protein Pcf11 (1553 aa).

Ser-2 carries the post-translational modification N-acetylserine. One can recognise a CID domain in the interval Ala-14–Asp-142. Position 120 is a phosphoserine (Ser-120). Residue Thr-121 is modified to Phosphothreonine. The disordered stretch occupies residues Asn-167–Ser-186. Phosphoserine occurs at positions 169 and 182. Over residues Ser-174–Ser-186 the composition is skewed to low complexity. Residues Leu-208–Ala-235 adopt a coiled-coil conformation. The tract at residues Ala-265–Ala-648 is disordered. Lys-291 participates in a covalent cross-link: Glycyl lysine isopeptide (Lys-Gly) (interchain with G-Cter in SUMO2). Basic and acidic residues predominate over residues His-308–Phe-318. The span at Asn-321–Ser-342 shows a compositional bias: polar residues. Lys-329 is covalently cross-linked (Glycyl lysine isopeptide (Lys-Gly) (interchain with G-Cter in SUMO2)). 3 stretches are compositionally biased toward basic and acidic residues: residues Lys-343–Ser-365, His-381–Glu-422, and Glu-428–Val-443. A Glycyl lysine isopeptide (Lys-Gly) (interchain with G-Cter in SUMO2) cross-link involves residue Lys-457. The segment covering Ser-476 to Lys-487 has biased composition (basic residues). A phosphoserine mark is found at Ser-490, Ser-495, Ser-510, and Ser-512. Residues Ser-495 to Arg-509 show a composition bias toward basic residues. Basic and acidic residues-rich tracts occupy residues Ser-530–Gln-568 and Ser-600–Lys-616. Ser-645 is subject to Phosphoserine. Lys-654 is covalently cross-linked (Glycyl lysine isopeptide (Lys-Gly) (interchain with G-Cter in SUMO2)). Ser-705 is modified (phosphoserine). The interval Phe-707–Phe-733 is disordered. Over residues Pro-716–Phe-725 the composition is skewed to basic and acidic residues. Lys-723 is covalently cross-linked (Glycyl lysine isopeptide (Lys-Gly) (interchain with G-Cter in SUMO2)). Residue Ser-777 is modified to Phosphoserine. Thr-785 bears the Phosphothreonine mark. At Ser-794 the chain carries Phosphoserine. Asymmetric dimethylarginine is present on residues Arg-805, Arg-820, and Arg-833. Ser-851 carries the phosphoserine modification. The tract at residues His-921–Gly-940 is disordered. Residues Arg-929, Arg-944, Arg-957, Arg-982, Arg-995, Arg-1008, Arg-1092, and Arg-1103 each carry the asymmetric dimethylarginine modification. Lys-1276 participates in a covalent cross-link: Glycyl lysine isopeptide (Lys-Gly) (interchain with G-Cter in SUMO2). The disordered stretch occupies residues Asp-1286 to Val-1313. Residues Pro-1301–Val-1313 are compositionally biased toward acidic residues. Residues Lys-1417, Lys-1509, Lys-1522, and Lys-1544 each participate in a glycyl lysine isopeptide (Lys-Gly) (interchain with G-Cter in SUMO2) cross-link. The disordered stretch occupies residues Cys-1516 to Val-1553.

As to quaternary structure, associates with the phosphorylated CTD domain of POLR2A /RNA polymerase II. In terms of processing, phosphorylation at Ser-120 and/or Thr-121 by WNK1 weakens its association with POLR2A/RNA polymerase II, promoting transcript release from the chromatin template and mRNA export to the cytoplasm.

It is found in the nucleus. Its function is as follows. Component of pre-mRNA cleavage complex II, which promotes transcription termination by RNA polymerase II. This is Pre-mRNA cleavage complex 2 protein Pcf11 from Mus musculus (Mouse).